Here is a 901-residue protein sequence, read N- to C-terminus: Probable dipeptidyl-aminopeptidase B (901 aa).

A compositionally biased stretch (low complexity) spans Met-1 to Thr-22. The disordered stretch occupies residues Met-1 to Gln-67. Over Met-1 to Arg-76 the chain is Cytoplasmic. Residues Leu-77 to Val-97 form a helical; Signal-anchor for type II membrane protein membrane-spanning segment. At Thr-98–Lys-901 the chain is on the vacuolar side. 2 N-linked (GlcNAc...) asparagine glycosylation sites follow: Asn-334 and Asn-625. The active-site Charge relay system is Ser-739. Asn-793 is a glycosylation site (N-linked (GlcNAc...) asparagine). Catalysis depends on charge relay system residues Asp-816 and His-849.

Belongs to the peptidase S9B family.

Its subcellular location is the vacuole membrane. It catalyses the reaction Release of an N-terminal dipeptide, Xaa-Yaa-|-Zaa-, from a polypeptide, preferentially when Yaa is Pro, provided Zaa is neither Pro nor hydroxyproline.. Its function is as follows. Type IV dipeptidyl-peptidase which removes N-terminal dipeptides sequentially from polypeptides having unsubstituted N-termini provided that the penultimate residue is proline. This Aspergillus niger (strain ATCC MYA-4892 / CBS 513.88 / FGSC A1513) protein is Probable dipeptidyl-aminopeptidase B (dapB).